The sequence spans 808 residues: MAQISLHGTLHVTIYEVDKLHSGGGPHFFRKLVENIEETVGFGKGVSKLYATIDLEKARVGRTRILENEQSNPRWYESFHVYCAHQASNVIFTVKDDNPIGATLIGRAYVPVEELLDGEEIDRWVEILDEDKNPVHSGSKIHVKLQYFEVTKDRNWGQGIRSSKYPGVPYTYFSQRQGCKVSLYQDAHIPDKFVPQIPLAGGNYYEPHRCWEDVFDAITNAKHLIYITGWSVYTEISLIRDSRRPKPGGDITLGELLKKKASEGVRVLMLVWDDRTSVGLLKKDGLMATHDEETEHFFQNTDVHCVLCPRNPDDGGSFVQDLQISTMFTHHQKIVVVDSAMPNGDSQRRRIVSFVGGLDLCDGRYDSPFHSLFRTLDSAHHDDFHQPNFAGASIEKGGPREPWHDIHSRLEGPIAWDVLFNFEQRWRKQGGKDLLIQLRELEDVIIPPSPVMYPDDFEAWNVQLFRSIDGGAAFGFPETPEDAPEAGLVSGKDNIIDRSIQDAYIHAIRRAKNFIYIENQYFLGSSFGWSPDGIKPEDINALHLIPKELSLKILSKIAAGERFTVYIVVPMWPEGIPESASVQAILDWQKRTMEMMYKDIVQALKANGIIEDPRNYLTFFCLGNREVKKSGEYEPAEKPEPDTDYIRAQEARRFMIYVHTKMMIVDDEYIIIGSANINQRSMDGARDSEIAMGAYQPHHLSTRQPARGQIHGFRMSLWYEHLGMLDESFLNPESEECVRKVNQMAEKYWDLYSSETLEHDLPGHLLRYPIGVASEGDVTELPGTEFFPDTKARVLGAKSDYLPPILTT.

A propeptide spanning residues 1–30 (MAQISLHGTLHVTIYEVDKLHSGGGPHFFR) is cleaved from the precursor. The region spanning 1–125 (MAQISLHGTL…LDGEEIDRWV (125 aa)) is the C2 domain. Asp186 is a Ca(2+) binding site. Positions 326–364 (TMFTHHQKIVVVDSAMPNGDSQRRRIVSFVGGLDLCDGR) constitute a PLD phosphodiesterase 1 domain. Residues His331, Lys333, and Asp338 contribute to the active site. Position 331 (His331) interacts with a 1,2-diacyl-sn-glycero-3-phosphate. Ca(2+) contacts are provided by His370 and His404. A 1,2-diacyl-sn-glycero-3-phosphate is bound by residues Gln520 and His659. In terms of domain architecture, PLD phosphodiesterase 2 spans 654–681 (FMIYVHTKMMIVDDEYIIIGSANINQRS). Residues His659, Lys661, and Asp666 contribute to the active site. Glu720 provides a ligand contact to Ca(2+).

It belongs to the phospholipase D family. C2-PLD subfamily. It depends on Ca(2+) as a cofactor. Expression is higher in radicle than in endosperm.

It localises to the cytoplasm. The protein localises to the membrane. It is found in the vacuole. The protein resides in the endoplasmic reticulum. Its subcellular location is the plastid. It localises to the cell membrane. It catalyses the reaction a 1,2-diacyl-sn-glycero-3-phosphocholine + H2O = a 1,2-diacyl-sn-glycero-3-phosphate + choline + H(+). In terms of biological role, hydrolyzes glycerol-phospholipids at the terminal phosphodiesteric bond. Plays an important role in various cellular processes, including phytohormone action, vesicular trafficking, secretion, cytoskeletal arrangement, meiosis, tumor promotion, pathogenesis, membrane deterioration and senescence. This is Phospholipase D alpha 1 (PLD1) from Ricinus communis (Castor bean).